We begin with the raw amino-acid sequence, 759 residues long: Probable Na(+)/H(+) antiporter C3A11.09 (759 aa).

Transmembrane regions (helical) follow at residues H12–I32, L36–A56, M105–I125, S133–G153, E172–I192, I206–A226, F244–V264, V295–P315, M319–A339, A361–A381, and V415–M435. Residue T442 is modified to Phosphothreonine. Residue S446 is modified to Phosphoserine. Position 448 is a phosphothreonine (T448). Basic and acidic residues-rich tracts occupy residues L514–A529, Y537–E547, I590–A601, N622–R647, and S655–Q671. 3 disordered regions span residues L514 to D558, S578 to R606, and N622 to E759. The span at N696–N713 shows a compositional bias: polar residues. N-linked (GlcNAc...) asparagine glycans are attached at residues N699 and N713. Residues R724–E733 are compositionally biased toward low complexity. At S735 the chain carries Phosphoserine.

The protein belongs to the fungal Na(+)/H(+) exchanger family.

The protein localises to the membrane. Its function is as follows. Sodium export from cell, takes up external protons in exchange for internal sodium ions. The sequence is that of Probable Na(+)/H(+) antiporter C3A11.09 (sod22) from Schizosaccharomyces pombe (strain 972 / ATCC 24843) (Fission yeast).